The chain runs to 262 residues: Acyl-[acyl-carrier-protein]--UDP-N-acetylglucosamine O-acyltransferase (262 aa).

Belongs to the transferase hexapeptide repeat family. LpxA subfamily. In terms of assembly, homotrimer.

It is found in the cytoplasm. The catalysed reaction is a (3R)-hydroxyacyl-[ACP] + UDP-N-acetyl-alpha-D-glucosamine = a UDP-3-O-[(3R)-3-hydroxyacyl]-N-acetyl-alpha-D-glucosamine + holo-[ACP]. Its pathway is glycolipid biosynthesis; lipid IV(A) biosynthesis; lipid IV(A) from (3R)-3-hydroxytetradecanoyl-[acyl-carrier-protein] and UDP-N-acetyl-alpha-D-glucosamine: step 1/6. Involved in the biosynthesis of lipid A, a phosphorylated glycolipid that anchors the lipopolysaccharide to the outer membrane of the cell. The polypeptide is Acyl-[acyl-carrier-protein]--UDP-N-acetylglucosamine O-acyltransferase (Histophilus somni (strain 2336) (Haemophilus somnus)).